We begin with the raw amino-acid sequence, 480 residues long: ATP-dependent rRNA helicase RRP3 (480 aa).

Composition is skewed to basic and acidic residues over residues 1-17 and 33-46; these read MAKA…KEES and DTTK…EPKK. Residues 1–63 are disordered; the sequence is MAKATEKRVK…VEVDESEEQT (63 aa). The short motif at 64–92 is the Q motif element; that stretch reads KTFKDLGVIDSICETCEELKFTKPTPIQA. The Helicase ATP-binding domain occupies 95-266; that stretch reads IPYALEGRDI…RASLVDPVRV (172 aa). ATP is bound at residue 108–115; the sequence is AQTGSGKT. Positions 214–217 match the DEAD box motif; sequence DEAD. The 161-residue stretch at 277–437 folds into the Helicase C-terminal domain; the sequence is NLLQYMVFCP…SYPLESEAVM (161 aa). The segment at 450–480 is disordered; sequence AIQEMKGEDGTKKRSKFDKKRRRDEMDIGEQ. The span at 462 to 471 shows a compositional bias: basic residues; that stretch reads KRSKFDKKRR.

This sequence belongs to the DEAD box helicase family. DDX47/RRP3 subfamily. Interacts with the SSU processome.

Its subcellular location is the nucleus. It carries out the reaction ATP + H2O = ADP + phosphate + H(+). Functionally, ATP-dependent rRNA helicase required for pre-ribosomal RNA processing. Involved in the maturation of the 35S-pre-rRNA and to its cleavage to mature 18S rRNA. The protein is ATP-dependent rRNA helicase RRP3 of Yarrowia lipolytica (strain CLIB 122 / E 150) (Yeast).